Here is a 599-residue protein sequence, read N- to C-terminus: Protein linkin (599 aa).

A signal peptide spans 1 to 19 (MKKILPIIWLINLVSGSLS). Topologically, residues 20–553 (LEKKAPDLLG…SRLYVTPSAL (534 aa)) are extracellular. N-linked (GlcNAc...) asparagine glycans are attached at residues N50, N117, N163, N361, and N378. The helical transmembrane segment at 554–574 (IVQSLAVIALVCCMLLMVVVF) threads the bilayer. Residues 575–599 (LHYREKKEDRYERQQQSHRFHFDAM) lie on the Cytoplasmic side of the membrane.

Belongs to the TIP family. In terms of tissue distribution, expressed in all somatic gonadal cells including distal tip cells, anchor cell, uterine precursor cells and spermatheca precursor cells of the hermaphrodite. Also expressed in the pharynx, pharyngeal-intestinal valve, intestine, excretory cell and canal, seam cells, a subset of hypodermal cells, vulval precursor cells of the hermaphrodite and hook precursor cells in the male.

It is found in the apical cell membrane. It localises to the lateral cell membrane. Its function is as follows. Probable cell adhesion protein involved in gonadal cell migration. This Caenorhabditis elegans protein is Protein linkin.